The following is a 273-amino-acid chain: Cytosolic sulfotransferase 4 (273 aa).

74–79 (KCGTTW) provides a ligand contact to 3'-phosphoadenylyl sulfate. The active-site Proton acceptor is H121. 3'-phosphoadenylyl sulfate-binding positions include R143 and 239-241 (RKG).

This sequence belongs to the sulfotransferase 1 family.

It localises to the cytoplasm. Functionally, sulfotransferase that utilizes 3'-phospho-5'-adenylyl sulfate (PAPS) as sulfonate donor. This is Cytosolic sulfotransferase 4 (SOT4) from Arabidopsis thaliana (Mouse-ear cress).